Here is a 190-residue protein sequence, read N- to C-terminus: Protein soem-1 (190 aa).

The 95-residue stretch at 96 to 190 (YMEQNMNRVE…LVLKNQLKPV (95 aa)) folds into the SH2 domain.

Interacts with abl-1. As to expression, expressed in PQR, but not AQR, Q neuroblast descendents.

Its function is as follows. Functions downstream of migratory protein mig-13 and may play a role in the control of Q neuroblast migration during larval development. The protein is Protein soem-1 of Caenorhabditis elegans.